Here is a 109-residue protein sequence, read N- to C-terminus: Large ribosomal subunit protein uL22 (109 aa).

This sequence belongs to the universal ribosomal protein uL22 family. In terms of assembly, part of the 50S ribosomal subunit.

Functionally, this protein binds specifically to 23S rRNA; its binding is stimulated by other ribosomal proteins, e.g. L4, L17, and L20. It is important during the early stages of 50S assembly. It makes multiple contacts with different domains of the 23S rRNA in the assembled 50S subunit and ribosome. Its function is as follows. The globular domain of the protein is located near the polypeptide exit tunnel on the outside of the subunit, while an extended beta-hairpin is found that lines the wall of the exit tunnel in the center of the 70S ribosome. The chain is Large ribosomal subunit protein uL22 from Cupriavidus taiwanensis (strain DSM 17343 / BCRC 17206 / CCUG 44338 / CIP 107171 / LMG 19424 / R1) (Ralstonia taiwanensis (strain LMG 19424)).